The following is a 351-amino-acid chain: Increased glyphosate resistance protein (351 aa).

Residues 1–18 (MHREDDSTSTGRREERLS) are compositionally biased toward basic and acidic residues. The segment at 1-29 (MHREDDSTSTGRREERLSTGKGDSLQPGP) is disordered.

Functionally, confers an increase in glyphosate resistance when expressed in E.coli. This chain is Increased glyphosate resistance protein, found in Pseudomonas sp. (strain PG2982).